Here is a 366-residue protein sequence, read N- to C-terminus: MTSTSSHSNHSALSSYGWDDSWADAFAPYAAEGLLPGRVVRVDRGQCDVVTADGVLRADTAFVTPHDPLRVVCTGDWVAVEPGGNPRYVRTYLPRRTAFVRSTSSKRSEGQILAANVDHAVVAVSLAVELDLARIERFLALAWESGAQPLVVLTKADLVPDPVTLAYLVQDVETAAPGVPVLPVSAEQGEGLDVLAAVVSGGTAVLLGQSGAGKSTLANALLGEAAMDVQAIRDVDGKGRHTTTTRNLLALPGGGVLIDTPGLRGVGLFDAGNGVDQVFAEIAELAEECRFHDCAHESEPGCAVLAAIDSGALPERRLESYRKLMRENQRIVAKTDARARAEIRKEYKRRGAIGKAAMEAKRGGLR.

Residues 107–266 (RSEGQILAAN…LIDTPGLRGV (160 aa)) enclose the CP-type G domain. Residues 154 to 157 (TKAD) and 208 to 216 (GQSGAGKST) contribute to the GTP site. Zn(2+)-binding residues include Cys-289, Cys-294, His-296, and Cys-302.

Belongs to the TRAFAC class YlqF/YawG GTPase family. RsgA subfamily. As to quaternary structure, monomer. Associates with 30S ribosomal subunit, binds 16S rRNA. The cofactor is Zn(2+).

The protein resides in the cytoplasm. In terms of biological role, one of several proteins that assist in the late maturation steps of the functional core of the 30S ribosomal subunit. Helps release RbfA from mature subunits. May play a role in the assembly of ribosomal proteins into the subunit. Circularly permuted GTPase that catalyzes slow GTP hydrolysis, GTPase activity is stimulated by the 30S ribosomal subunit. The sequence is that of Small ribosomal subunit biogenesis GTPase RsgA from Streptomyces coelicolor (strain ATCC BAA-471 / A3(2) / M145).